The following is a 1049-amino-acid chain: Probable ATP-dependent permease (1049 aa).

The signal sequence occupies residues Met1–Ala25. Residues Lys26–Lys324 lie on the Lumenal side of the membrane. N-linked (GlcNAc...) asparagine glycans are attached at residues Asn50, Asn114, Asn165, and Asn221. Residues Leu325–Ile345 form a helical membrane-spanning segment. At Ser346–Lys463 the chain is on the cytoplasmic side. An ABC transporter domain is found at Leu384–Asp631. ATP is bound at residue Gly423–Thr430. The chain crosses the membrane as a helical span at residues Ile464–Phe481. Residues Glu482–Lys793 lie on the Lumenal side of the membrane. A phosphoserine mark is found at Ser659 and Ser702. Residues Lys793–Ile1044 enclose the ABC transmembrane type-2 domain. The helical transmembrane segment at Leu794–Tyr814 threads the bilayer. Residues Asn815–Gly828 are Cytoplasmic-facing. A helical membrane pass occupies residues Leu829–Ala849. Topologically, residues Leu850 to Glu877 are lumenal. Residues Val878 to Gly898 form a helical membrane-spanning segment. Residues Leu899–Cys909 are Cytoplasmic-facing. The helical transmembrane segment at Ile910–Ile930 threads the bilayer. At Phe931–Ser937 the chain is on the lumenal side. N-linked (GlcNAc...) asparagine glycosylation is present at Asn935. A helical membrane pass occupies residues Ile938 to Thr958. The Cytoplasmic segment spans residues Lys959–Asn1000. Residues Ile1001–Phe1021 form a helical membrane-spanning segment. Residues Asp1022–Lys1024 are Lumenal-facing. Residues Ile1025–Val1045 form a helical membrane-spanning segment. Residues Val1046–Lys1049 are Cytoplasmic-facing.

It belongs to the ABC transporter superfamily. ABCG family. Eye pigment precursor importer (TC 3.A.1.204) subfamily.

It is found in the endoplasmic reticulum membrane. In Saccharomyces cerevisiae (strain ATCC 204508 / S288c) (Baker's yeast), this protein is Probable ATP-dependent permease (ADP1).